We begin with the raw amino-acid sequence, 197 residues long: Small ribosomal subunit protein uS4c (197 aa).

Positions 85–157 constitute an S4 RNA-binding domain; sequence MRLDNILFRL…LQLFTGKELA (73 aa).

The protein belongs to the universal ribosomal protein uS4 family. Part of the 30S ribosomal subunit. Contacts protein S5. The interaction surface between S4 and S5 is involved in control of translational fidelity.

Its subcellular location is the plastid. In terms of biological role, one of the primary rRNA binding proteins, it binds directly to 16S rRNA where it nucleates assembly of the body of the 30S subunit. Its function is as follows. With S5 and S12 plays an important role in translational accuracy. The protein is Small ribosomal subunit protein uS4c (rps4) of Cuscuta gronovii (Common dodder).